The following is a 463-amino-acid chain: Ribulose bisphosphate carboxylase large chain (463 aa).

Lys-5 is modified (N6,N6,N6-trimethyllysine). The substrate site is built by Asn-114 and Thr-164. Catalysis depends on Lys-166, which acts as the Proton acceptor. Lys-168 serves as a coordination point for substrate. Mg(2+) is bound by residues Lys-192, Asp-194, and Glu-195. N6-carboxylysine is present on Lys-192. His-285 serves as the catalytic Proton acceptor. Substrate-binding residues include Arg-286, His-318, and Ser-370.

The protein belongs to the RuBisCO large chain family. Type I subfamily. As to quaternary structure, heterohexadecamer of 8 large chains and 8 small chains; disulfide-linked. The disulfide link is formed within the large subunit homodimers. Mg(2+) serves as cofactor. Post-translationally, the disulfide bond which can form in the large chain dimeric partners within the hexadecamer appears to be associated with oxidative stress and protein turnover.

The protein localises to the plastid. It localises to the chloroplast. The enzyme catalyses 2 (2R)-3-phosphoglycerate + 2 H(+) = D-ribulose 1,5-bisphosphate + CO2 + H2O. The catalysed reaction is D-ribulose 1,5-bisphosphate + O2 = 2-phosphoglycolate + (2R)-3-phosphoglycerate + 2 H(+). Functionally, ruBisCO catalyzes two reactions: the carboxylation of D-ribulose 1,5-bisphosphate, the primary event in carbon dioxide fixation, as well as the oxidative fragmentation of the pentose substrate in the photorespiration process. Both reactions occur simultaneously and in competition at the same active site. This chain is Ribulose bisphosphate carboxylase large chain, found in Pelargonium grandiflorum (Geranium).